Here is a 299-residue protein sequence, read N- to C-terminus: NAD kinase (299 aa).

D71 functions as the Proton acceptor in the catalytic mechanism. Residues 71-72 (DG), 145-146 (ND), R173, D175, 186-191 (TAYSLS), A210, and Q248 contribute to the NAD(+) site.

Belongs to the NAD kinase family. A divalent metal cation is required as a cofactor.

The protein localises to the cytoplasm. The catalysed reaction is NAD(+) + ATP = ADP + NADP(+) + H(+). Involved in the regulation of the intracellular balance of NAD and NADP, and is a key enzyme in the biosynthesis of NADP. Catalyzes specifically the phosphorylation on 2'-hydroxyl of the adenosine moiety of NAD to yield NADP. The chain is NAD kinase from Bordetella pertussis (strain Tohama I / ATCC BAA-589 / NCTC 13251).